The chain runs to 41 residues: Bacteriocin (41 aa).

Cysteines 9 and 14 form a disulfide.

The protein localises to the secreted. Its function is as follows. Bacteriocin active against S.aureus, S.typhi, B.thuringiensis, Klebsiella sp., E.coli KL16 and E.coli Gj137. The polypeptide is Bacteriocin (Lactococcus sp).